A 431-amino-acid chain; its full sequence is O-methyltransferase xanE (431 aa).

D283 is a binding site for S-adenosyl-L-methionine. H330 acts as the Proton acceptor in catalysis.

It belongs to the class I-like SAM-binding methyltransferase superfamily. Cation-independent O-methyltransferase family.

The protein operates within secondary metabolite biosynthesis. Its function is as follows. O-methyltransferase; part of the gene cluster that mediates the biosynthesis of the isocyanide xanthocillin and its derivatives. The first step of the pathway consists in the conversion of tyrosine into a vinyl-isonitrile intermediate by the isocyanide synthase xanB. Subsequent oxidative dimerization of this intermediate to form xanthocillin may involve the cytochrome P450 monooxygenase xanG, whose expression is coregulated with that of XanB. Xanthocillin can be further modified by the isonitrile hydratase-like protein xanA which introduces N-formyl groups and the methyltransferase xanE which introduces methyl groups, leading to the production of several derivatives including fumiformamide. Finally, fumiformamide can be subject to both oxidative and reductive cyclization to yield melanocins E and F, respectively. This is O-methyltransferase xanE from Aspergillus fumigatus (strain ATCC MYA-4609 / CBS 101355 / FGSC A1100 / Af293) (Neosartorya fumigata).